The sequence spans 87 residues: Large ribosomal subunit protein bL27 (87 aa).

The disordered stretch occupies residues 1-20; sequence MARKRGGSGSKNGRDSNPKY.

Belongs to the bacterial ribosomal protein bL27 family.

This is Large ribosomal subunit protein bL27 (rpmA) from Treponema pallidum (strain Nichols).